The following is a 240-amino-acid chain: Myomodulin neuropeptides 2 (240 aa).

The first 23 residues, 1 to 23, serve as a signal peptide directing secretion; sequence MWKILETCSCFLVVAVLSGLGKA. The segment at 23-44 is disordered; the sequence is AQPESFSGSAVTDDSTSGANKR. Positions 24–44 are excised as a propeptide; that stretch reads QPESFSGSAVTDDSTSGANKR. Residues 26-41 are compositionally biased toward polar residues; the sequence is ESFSGSAVTDDSTSGA. Leu-51 and Leu-60 each carry leucine amide. 2 consecutive propeptides (connecting peptide) follow at residues 72-81 and 84-112; these read SGHQVPMLRA and GSPD…RDQS. Ala-81 is subject to Alanine amide. Position 115 is a pyrrolidone carboxylic acid (Gln-115). Position 121 is a tyrosine amide (Tyr-121). 10 consecutive propeptides (connecting peptide) follow at residues 124–147, 124–148, 124–149, 124–168, 131–168, 149–168, 150–168, 151–168, 171–190, and 171–199; these read DNNG…SNFD, DNNG…NFDL, DNNG…FDLL, DNNG…GGRY, DLLD…GGRY, LSSL…GGRY, SSLN…GGRY, SLNN…GGRY, SLPD…LVQS, and SLPD…PYSS. Isoleucine amide is present on Ile-207. Residues 210–219 constitute a propeptide that is removed on maturation; the sequence is FSGSPRLQAK. The segment at 212–240 is disordered; that stretch reads GSPRLQAKAVPRPRIGRQESQMREAKSAE. Residue Ile-226 is modified to Isoleucine amide. The propeptide occupies 227–240; that stretch reads GRQESQMREAKSAE. A compositionally biased stretch (basic and acidic residues) spans 227-240; that stretch reads GRQESQMREAKSAE.

As to expression, expressed in the pedal-buccal projection neurons in the pedal ganglion.

It localises to the secreted. Its function is as follows. MMG2-DPs (Myomodulin gene 2-derived peptides) bias egestive feeding programs toward ingestive ones, and modulate accessory radula closer (ARC) muscle contractions. The protein is Myomodulin neuropeptides 2 (MMG2) of Aplysia californica (California sea hare).